Consider the following 616-residue polypeptide: GPI mannosyltransferase 3 (616 aa).

At 1 to 16 the chain is on the cytoplasmic side; it reads MAHEVHRIKPKLGRTQ. Residues 17–37 traverse the membrane as a helical segment; that stretch reads IFWVFLAFRVLNAVLTRTFFQ. At 38 to 86 the chain is on the lumenal side; sequence ADEFWQALEPAHWKAFKYGELTWEWKFGVRSYLFPMIFELTYRLVSLSS. Residues 87-107 form a helical membrane-spanning segment; that stretch reads ILLHYALLLLSTIGSDLLILL. The Cytoplasmic portion of the chain corresponds to 108–136; it reads LPKYELSWQVAEDLKRLPFDVTRSFEYYG. A helical transmembrane segment spans residues 137 to 157; the sequence is VIYAPKIVMAVLASIGEYYIV. Over 158–188 the chain is Lumenal; that stretch reads RFVQKLYLLTLDKRNEKEEEERRSGLSEITK. A helical transmembrane segment spans residues 189 to 209; the sequence is FALLLSLTNFFNCFFITRTFI. At 210–240 the chain is on the cytoplasmic side; sequence NSFEMILTSIALYYWDWTGGQMIKESSFTKS. Residues 241–261 form a helical membrane-spanning segment; the sequence is LIFAFLACLQRPSSGLIWVIP. Residues 262–278 lie on the Lumenal side of the membrane; that stretch reads SISLILNLVGKKQYHLL. The helical transmembrane segment at 279–299 threads the bilayer; sequence FITFSKVLRSFFLVFTANAII. The Cytoplasmic segment spans residues 300 to 338; sequence DMYFYEKVTFPFFRFLKFNFTTPLSKFYGVAPWHFHFFQ. The helical transmembrane segment at 339–359 threads the bilayer; it reads SLPIVLGASIPAFAFGLFFPL. Residues 360–392 lie on the Lumenal side of the membrane; the sequence is SKRSFPKKYLNPFFQVKLTILLNLLVYSTLPHK. The chain crosses the membrane as a helical span at residues 393–413; it reads EFRFIFPLQPLFILISSFGLL. Residues 414–423 are Cytoplasmic-facing; sequence RLDRDYWKRL. The helical transmembrane segment at 424–444 threads the bilayer; that stretch reads SGLKSLLWLVPFVSVFIALLL. Over 445 to 616 the chain is Lumenal; sequence DTFHESGSIE…DYSDIPAADI (172 aa).

The protein belongs to the glycosyltransferase 22 family. PIGB subfamily.

The protein localises to the endoplasmic reticulum membrane. It functions in the pathway glycolipid biosynthesis; glycosylphosphatidylinositol-anchor biosynthesis. Its function is as follows. Mannosyltransferase involved in glycosylphosphatidylinositol-anchor biosynthesis. Transfers the third mannose to Man2-GlcN-acyl-PI during GPI precursor assembly. The protein is GPI mannosyltransferase 3 (GPI10) of Saccharomyces cerevisiae (strain ATCC 204508 / S288c) (Baker's yeast).